We begin with the raw amino-acid sequence, 314 residues long: Cytochrome bo(3) ubiquinol oxidase subunit 2 (314 aa).

The signal sequence occupies residues 1-23 (MSKKRYPRLFGILPFLGMLLLSG). Cys-24 carries N-palmitoyl cysteine lipidation. Cys-24 carries the S-diacylglycerol cysteine lipid modification. The Periplasmic segment spans residues 24–42 (CNWTLLDPKGQVGIEQKNL). The helical transmembrane segment at 43–63 (ILIATGLMLLVVIPVIIMTVV) threads the bilayer. Residues 64-86 (FAWKYRASNKAATYTPDWSHSTK) are Cytoplasmic-facing. The chain crosses the membrane as a helical span at residues 87–107 (IEAAVWIIPILIIIALGYFTY). The Periplasmic portion of the chain corresponds to 108 to 314 (HSTHKLDPYR…SMQPAAGAEE (207 aa)). The span at 278-293 (YEGMNRGRPSHEEAGS) shows a compositional bias: basic and acidic residues. The disordered stretch occupies residues 278–314 (YEGMNRGRPSHEEAGSKDLATTKGVESSMQPAAGAEE).

This sequence belongs to the cytochrome c oxidase subunit 2 family. Heterooctamer of two A chains, two B chains, two C chains and two D chains.

The protein localises to the cell inner membrane. In terms of biological role, cytochrome bo(3) ubiquinol terminal oxidase is the component of the aerobic respiratory chain of E.coli that predominates when cells are grown at high aeration. Has proton pump activity across the membrane in addition to electron transfer, pumping 2 protons/electron. In Pseudomonas putida (Arthrobacter siderocapsulatus), this protein is Cytochrome bo(3) ubiquinol oxidase subunit 2 (cyoA).